A 499-amino-acid chain; its full sequence is Type-1 glutamine synthetase 1 (499 aa).

The GS beta-grasp domain occupies 50–146; the sequence is PQLKFIRVCW…IFGEFFYLDN (97 aa). Residues 158–499 enclose the GS catalytic domain; that stretch reads PRNSLQRAID…DQILKLLELF (342 aa).

This sequence belongs to the glutamine synthetase family.

The catalysed reaction is L-glutamate + NH4(+) + ATP = L-glutamine + ADP + phosphate + H(+). The protein is Type-1 glutamine synthetase 1 (glnA1) of Dictyostelium discoideum (Social amoeba).